A 377-amino-acid chain; its full sequence is Histone deacetylase 8 (377 aa).

Residues 14–324 (LPPVYIYSPE…WTYLTGVILG (311 aa)) form a histone deacetylase region. Position 39 is a phosphoserine (Ser-39). Asp-101 contacts substrate. Residue His-143 is the Proton acceptor of the active site. Gly-151 serves as a coordination point for substrate. A divalent metal cation contacts are provided by Asp-178, His-180, and Asp-267. Tyr-306 provides a ligand contact to substrate.

Belongs to the histone deacetylase family. HD type 1 subfamily. As to quaternary structure, interacts with CBFA2T3. Interacts with phosphorylated SMG5/EST1B; this interaction protects SMG5 from ubiquitin-mediated degradation. Associates with alpha-SMA (smooth muscle alpha-actin). It depends on a divalent metal cation as a cofactor. Phosphorylated by PKA on serine 39. Phosphorylation reduces deacetylase activity observed preferentially on histones H3 and H4.

It localises to the nucleus. The protein localises to the chromosome. It is found in the cytoplasm. It catalyses the reaction N(6)-acetyl-L-lysyl-[histone] + H2O = L-lysyl-[histone] + acetate. The catalysed reaction is N(6)-acetyl-L-lysyl-[protein] + H2O = L-lysyl-[protein] + acetate. The enzyme catalyses N(6)-(2E)-butenoyl-L-lysyl-[protein] + H2O = (2E)-2-butenoate + L-lysyl-[protein]. With respect to regulation, its activity is inhibited by trichostatin A (TSA) and butyrate, 2 well known histone deacetylase inhibitors. histone deacetylase inhibitor. Histone deacetylase that catalyzes the deacetylation of lysine residues on the N-terminal part of the core histones (H2A, H2B, H3 and H4). Histone deacetylation gives a tag for epigenetic repression and plays an important role in transcriptional regulation, cell cycle progression and developmental events. Histone deacetylases act via the formation of large multiprotein complexes. Also involved in the deacetylation of cohesin complex protein SMC3 regulating release of cohesin complexes from chromatin. May play a role in smooth muscle cell contractility. In addition to protein deacetylase activity, also has protein-lysine deacylase activity: acts as a protein decrotonylase by mediating decrotonylation ((2E)-butenoyl) of histones. This chain is Histone deacetylase 8 (Hdac8), found in Mus musculus (Mouse).